A 585-amino-acid chain; its full sequence is METHRRSSTNSIRSHKPARPIALEDDSTKASDALPLPLYLTNAVFFTLFFSAVYFLLCRWREKIRSSTPLHVVTFSEIVAILASVASFIYLLGFFGIDFVQSLVLRPSADVWATEDDEVESEVLLRNEDARHVPCGQALDRSIRSLQPPEPIVTAEKVFDEMPVTVMTEEDEEIIRSVVCGMTPSYSLESKLDDCKRAAAIRREALQRITGKSLSGLPLDGFDYESILGQCCEMPVGYEQIPVGIAGPLLLNGREYSVPMATTEGCLVASTNRGCKAIHLSGGATSVLLRDGMTRAPVVRFGTAKRAADLKLYLEDPENFETLACVFNRSSRFARLQSIKCAIAGKNLYLRFSCFTGDAMGMNMVSKGVQNVLDFLQTDFPDMDVIGISGNFCSDKKPAAVNWIEGRGKSVVCEAIINGDVVTKVLKTSVESLVELNMLKNLTGSAMAGALGGFNAHASNIVTAVYIATGQDPAQNVESSHCITMMEAVNGGKDLHVSVTMPSIEVGTVGGGTQLASQSACLNLLGVKGASKESPGANSILLATIVAGAVLAGELSLMSALAAGQLVKSHMKYNRSSKDVSKVSS.

2 helical membrane passes run 38-58 (LYLT…FLLC) and 77-97 (EIVA…FFGI). A linker region spans residues 98–169 (DFVQSLVLRP…DEMPVTVMTE (72 aa)). Positions 170-585 (EDEEIIRSVV…SSKDVSKVSS (416 aa)) are catalytic. The active-site Charge relay system is the glutamate 264. The N-linked (GlcNAc...) asparagine glycan is linked to asparagine 328. The active-site Charge relay system is lysine 396. N-linked (GlcNAc...) asparagine glycosylation is present at asparagine 441. Catalysis depends on aspartate 472, which acts as the Charge relay system. The active-site Proton donor is the histidine 570. N-linked (GlcNAc...) asparagine glycosylation occurs at asparagine 574.

Belongs to the HMG-CoA reductase family.

It localises to the endoplasmic reticulum membrane. Its subcellular location is the mitochondrion membrane. It is found in the plastid membrane. The enzyme catalyses (R)-mevalonate + 2 NADP(+) + CoA = (3S)-3-hydroxy-3-methylglutaryl-CoA + 2 NADPH + 2 H(+). The protein operates within metabolic intermediate biosynthesis; (R)-mevalonate biosynthesis; (R)-mevalonate from acetyl-CoA: step 3/3. Functionally, catalyzes the synthesis of mevalonate. The specific precursor of all isoprenoid compounds present in plants. In Gossypium hirsutum (Upland cotton), this protein is 3-hydroxy-3-methylglutaryl-coenzyme A reductase 1 (HMG1).